We begin with the raw amino-acid sequence, 215 residues long: Redox-sensing transcriptional repressor Rex (215 aa).

A DNA-binding region (H-T-H motif) is located at residues 18–57; that stretch reads LYYRFLKNLHASGKQRVSSAELSDAVKVDSATIRRDFSYF. Position 92-97 (92-97) interacts with NAD(+); it reads GVGNLG.

The protein belongs to the transcriptional regulatory Rex family. In terms of assembly, homodimer.

It is found in the cytoplasm. Functionally, modulates transcription in response to changes in cellular NADH/NAD(+) redox state. The polypeptide is Redox-sensing transcriptional repressor Rex (Bacillus licheniformis (strain ATCC 14580 / DSM 13 / JCM 2505 / CCUG 7422 / NBRC 12200 / NCIMB 9375 / NCTC 10341 / NRRL NRS-1264 / Gibson 46)).